The primary structure comprises 613 residues: Zinc metalloproteinase-disintegrin-like MTP8 (613 aa).

Residues 1–20 form the signal peptide; sequence MIEVLLVTICFTVFPYQGSP. Residues 21-191 constitute a propeptide that is removed on maturation; that stretch reads IILESGNVND…DETIEKISQL (171 aa). The region spanning 205–401 is the Peptidase M12B domain; sequence KYIELYVVVD…VRPQCILNKP (197 aa). Glutamate 208 provides a ligand contact to Ca(2+). Residue asparagine 282 is glycosylated (N-linked (GlcNAc...) asparagine). Aspartate 292 contacts Ca(2+). 3 cysteine pairs are disulfide-bonded: cysteine 316–cysteine 396, cysteine 356–cysteine 380, and cysteine 358–cysteine 363. Residues histidine 341, histidine 345, and histidine 351 each coordinate Zn(2+). Ca(2+)-binding residues include cysteine 396, asparagine 399, asparagine 414, phenylalanine 416, glutamate 418, glutamate 421, and aspartate 424. Positions 409-495 constitute a Disintegrin domain; that stretch reads PPVCGNYFVE…KCPTDSFQRN (87 aa). 15 disulfides stabilise this stretch: cysteine 412-cysteine 441, cysteine 423-cysteine 436, cysteine 425-cysteine 431, cysteine 435-cysteine 458, cysteine 449-cysteine 455, cysteine 454-cysteine 480, cysteine 467-cysteine 487, cysteine 474-cysteine 506, cysteine 499-cysteine 511, cysteine 518-cysteine 568, cysteine 533-cysteine 575, cysteine 543-cysteine 577, cysteine 546-cysteine 556, cysteine 563-cysteine 601, and cysteine 595-cysteine 606. A glycan (N-linked (GlcNAc...) asparagine) is linked at asparagine 437. The short motif at 473 to 475 is the D/ECD-tripeptide element; the sequence is DCD. Residues aspartate 475, leucine 476, glutamate 478, and aspartate 490 each contribute to the Ca(2+) site. 2 N-linked (GlcNAc...) asparagine glycosylation sites follow: asparagine 550 and asparagine 572.

This sequence belongs to the venom metalloproteinase (M12B) family. P-III subfamily. Monomer. The cofactor is Zn(2+). Expressed by the venom gland.

Its subcellular location is the secreted. In terms of biological role, snake venom zinc metalloproteinase that may impair hemostasis in the prey. This Drysdalia coronoides (White-lipped snake) protein is Zinc metalloproteinase-disintegrin-like MTP8.